A 349-amino-acid polypeptide reads, in one-letter code: Isopentenyl-diphosphate delta-isomerase (349 aa).

6–7 is a substrate binding site; sequence RK. FMN is bound by residues 62–64, serine 93, and asparagine 122; that span reads AMT. Glutamine 152 lines the substrate pocket. Glutamate 153 serves as a coordination point for Mg(2+). FMN is bound by residues lysine 184, threonine 214, 258–259, and 280–281; these read GG and AG.

The protein belongs to the IPP isomerase type 2 family. In terms of assembly, homooctamer. Dimer of tetramers. The cofactor is FMN. It depends on NADPH as a cofactor. Requires Mg(2+) as cofactor.

The protein localises to the cytoplasm. It carries out the reaction isopentenyl diphosphate = dimethylallyl diphosphate. Its function is as follows. Involved in the biosynthesis of isoprenoids. Catalyzes the 1,3-allylic rearrangement of the homoallylic substrate isopentenyl (IPP) to its allylic isomer, dimethylallyl diphosphate (DMAPP). In Bacillus cereus (strain ATCC 10987 / NRS 248), this protein is Isopentenyl-diphosphate delta-isomerase.